The following is a 1446-amino-acid chain: MEAETTVDSLLKEIDMEMEMQSGNDVAQSNGYLLPLQEIGDETMDMLVQYNTENNANSNVNANANANANQWNKVDDPQDLLPMENNYDDDEEQGDESDTTNLLSGNKHLTEEESEQVLVDSKNLVLPPSSSKSNLINNLKQVVEDEVSDSQLSNDMDDTRTLNFSVKGTEPLLADELQDKEPDMIEVSTIYDGPDMISMADDSDTEDIDLLSKAKKPVSPSKIPITNAQTINYFKDAPVEDAKLQTVPDDIPLETKQTTVSNDILSNVETLLPPTLERPSFVISNLKEASQSVENLGFPDYEEDSQSEQETSVLHHTPTDFHAHEFEVFATELPDINVTPSIKPIDIDNNCEHENRLVSEEESKGVISSVPENENLPAVKSNPSSNSISDMLEIRQENKLDETLNMIDHQLSSNKSIDSVKTVSDNNISKSANDGSVEDVADSGKETSDIARNIEESHNSLINLTSGNNFDQSMHNDLIEESNTRVNVTESDITASEDSFNGSHDQNSSLNNLTKNDNGIQQNLEDNHTGIQPEMVVPEEVTTTLPEVNILPASENMLENTSESEISVQFLQNRDNEDKVSSDPQLEENIRSTETVMNTQETFEPKPAKKNQYTDREIEVLNSQKDISEATDNSAVNSRISSSASNFTPVLPPLPKLEKLSIDDPFDDEFETSNESMQMKNSVKPTDYLSIWHLQEQTTKAVSPALSSNSQFSYNSNSTKSSVASPVPATAFKFKPKIVSRSKYYYPDNNIQQEQSMDFIYTKLPSILDPMRRNTINSKKIRQTVIDKRKSHPSFSVDEGNTITEVNIEPEVKVQPISIENDSSSLKANNQDDNESCSSGSQAFVTPSATMDNFDSQFNELGTSFENDLENVLNYFDKDINTNTSSDLIEETTTKNQALPTSKVWSESVDYSLPTGEEPNVDHNIMKKLLNTENSELNECRSDQEHHIIDNAGLGIWRSTANDIATGNVDMFALNGRDISISKSEMTNDIDMGIFSDKKSLVHTPELSPVKSTHVGSPFKVISPKKNTQKDLKDGTTAEKRVSSESEAAQISIMSAVGEITNKDTAVVDDASNKDNIDAGQVGNEGEPIVDKGLLYLHLQGTTKLSLAGINAHHPKYSIEFDNGKNVVRTDWTELDSRGTISLNKEFEIPIDQSINKLIITLMIKYTRLTNELVEVTKRIPIGKKFPFGKMKYRTETQFVERSTVKDEWDYLFARDGSFGRCEILLDESLFEKIRFKEQDLSFDLLNKWSRLQNNSSSKVTQEALYDLPRRPAYKVGSLKVKGCFLERVSNDEKFPVSLKKAKSIVEKYRSQQDITKEGYLLQEGGDLSSQMKNRFFKLNGVELVGYHEVSMKPKIRINMLKVVKVIGKDDVVTGKDNVRNFTTWVLMNDCFQLVFDDGEVITFSDESSLADEQSWYMKLKEVVELNAFHQPWVKRFSENMIINDI.

6 disordered regions span residues 69-103, 358-385, 425-446, 495-525, 823-844, and 1025-1044; these read NQWN…TNLL, VSEE…NPSS, DNNI…SGKE, ASED…QNLE, SSSL…SQAF, and KKNT…RVSS. Acidic residues predominate over residues 86 to 98; sequence NYDDDEEQGDESD. Polar residues-rich tracts occupy residues 425–434 and 495–524; these read DNNISKSAND and ASED…QQNL. Residues 1028–1044 are compositionally biased toward basic and acidic residues; the sequence is TQKDLKDGTTAEKRVSS. The PH domain maps to 1314 to 1425; it reads DITKEGYLLQ…WYMKLKEVVE (112 aa).

This sequence belongs to the BUD4 family.

The protein resides in the bud neck. Required for selection of future bud sites. Cooperates with other bud site selection proteins to recognize a spatial landmark during mitosis and they subsequently become a landmark for downstream polarity establishment factors that coordinate budding and cytokinesis. Involved in the septin organization at the bud neck. The chain is Bud site selection protein 4 (BUD4) from Candida glabrata (strain ATCC 2001 / BCRC 20586 / JCM 3761 / NBRC 0622 / NRRL Y-65 / CBS 138) (Yeast).